We begin with the raw amino-acid sequence, 493 residues long: Glycerol kinase 2 (493 aa).

S12 contributes to the ADP binding site. Residues S12 and T13 each coordinate ATP. S12 is a sn-glycerol 3-phosphate binding site. K16 provides a ligand contact to ADP. Sn-glycerol 3-phosphate is bound by residues R82, E83, Y134, and D243. The glycerol site is built by R82, E83, Y134, D243, and Q244. 2 residues coordinate ADP: T265 and G308. T265, G308, and N312 together coordinate ATP. Residue N413 coordinates ADP.

Belongs to the FGGY kinase family. As to quaternary structure, homotetramer and homodimer (in equilibrium).

The enzyme catalyses glycerol + ATP = sn-glycerol 3-phosphate + ADP + H(+). It functions in the pathway polyol metabolism; glycerol degradation via glycerol kinase pathway; sn-glycerol 3-phosphate from glycerol: step 1/1. With respect to regulation, activated by phosphorylation and inhibited by fructose 1,6-bisphosphate (FBP). In terms of biological role, key enzyme in the regulation of glycerol uptake and metabolism. Catalyzes the phosphorylation of glycerol to yield sn-glycerol 3-phosphate. The protein is Glycerol kinase 2 of Clostridium tetani (strain Massachusetts / E88).